The sequence spans 65 residues: uncharacterized protein (65 aa).

A run of 2 helical transmembrane segments spans residues 4-24 (AWLFWSVIVLYFFIKFFDKVL) and 39-59 (LPIPMKILLTIALVLFLFIVF).

It is found in the membrane. This is an uncharacterized protein from Streptococcus pneumoniae serotype 2 (strain D39 / NCTC 7466).